Consider the following 2371-residue polypeptide: NBAS subunit of NRZ tethering complex (2371 aa).

The segment at 1–1035 is interaction with USE1; the sequence is MAAPESGPAL…KTEATTKLHD (1035 aa). 2 WD repeats span residues 130 to 169 and 316 to 355; these read DPKP…LFVI and QEQD…QQGE. Phosphoserine is present on residues serine 473 and serine 475. An interaction with ZW10 and RINT1 region spans residues 1036–2371; that stretch reads MVDQLEQILS…TALRAAQHWV (1336 aa). Lysine 1057 carries the post-translational modification N6-acetyllysine.

In terms of assembly, component of the NRZ complex composed of NBAS, ZW10 and RINT1/TIP20L; NRZ associates with SNAREs STX18, USE1, BNIP1/SEC20L and SEC22B (the assembly has been described as syntaxin 18 complex); links NRZ to SNARE USE1. In terms of tissue distribution, broadly expressed, with highest levels in heart and skeletal muscle, and lowest levels in liver, small intestine and thymus. Well expressed in retinal ganglion cells, epidermal skin cells, and leukocytes. Up-regulated together with N-myc in some neuroblastoma cell lines.

It localises to the cytoplasm. Its subcellular location is the endoplasmic reticulum. The protein resides in the endoplasmic reticulum membrane. Involved in Golgi-to-endoplasmic reticulum (ER) retrograde transport; the function is proposed to depend on its association in the NRZ complex which is believed to play a role in SNARE assembly at the ER. Required for normal embryonic development. May play a role in the nonsense-mediated decay pathway of mRNAs containing premature stop codons. This Homo sapiens (Human) protein is NBAS subunit of NRZ tethering complex.